Reading from the N-terminus, the 210-residue chain is Putative transmembrane protein DDB_G0267530 (210 aa).

A disordered region spans residues 1–40 (MGVEDQPQTQPQTQPQQQPQMGYQPQMGYQPQAQMGYQPQ). The next 2 membrane-spanning stretches (helical) occupy residues 119-139 (VIVF…FFFI) and 148-168 (TFGI…VIVV).

It is found in the membrane. In Dictyostelium discoideum (Social amoeba), this protein is Putative transmembrane protein DDB_G0267530.